The sequence spans 186 residues: Ribosome rescue factor SmrB (186 aa).

Positions 99–174 (IDLHGLTQHQ…SDAAIIVIIE (76 aa)) constitute a Smr domain.

Belongs to the SmrB family. In terms of assembly, associates with collided ribosomes, but not with correctly translating polysomes.

Functionally, acts as a ribosome collision sensor. Detects stalled/collided disomes (pairs of ribosomes where the leading ribosome is stalled and a second ribosome has collided with it) and endonucleolytically cleaves mRNA at the 5' boundary of the stalled ribosome. Stalled/collided disomes form a new interface (primarily via the 30S subunits) that binds SmrB. Cleaved mRNA becomes available for tmRNA ligation, leading to ribosomal subunit dissociation and rescue of stalled ribosomes. In Buchnera aphidicola subsp. Acyrthosiphon pisum (strain 5A), this protein is Ribosome rescue factor SmrB.